The following is a 676-amino-acid chain: Beta-taxilin (676 aa).

Disordered stretches follow at residues Met-1–Glu-55 and Ala-71–Leu-131. Composition is skewed to polar residues over residues Glu-8–Ser-25 and Gln-34–Gln-45. Basic and acidic residues predominate over residues Val-75–Val-92. Positions Gly-93 to Glu-105 are enriched in acidic residues. Over residues Glu-106 to Leu-131 the composition is skewed to basic and acidic residues. The stretch at Glu-157–Leu-461 forms a coiled coil. Residues Glu-464 to Gln-486 form a disordered region.

This sequence belongs to the taxilin family. Specifically expressed in skeletal and cardiac muscle.

It localises to the cytoplasm. In terms of biological role, promotes neurite-outgrowth. May be involved in intracellular vesicle traffic. The polypeptide is Beta-taxilin (TXLNB) (Gallus gallus (Chicken)).